A 942-amino-acid polypeptide reads, in one-letter code: Lambda-carrageenase (942 aa).

Residues 1–25 (MKIKILSAMVASSLLIGCVIPTVKA) form the signal peptide.

As to quaternary structure, monomer.

The protein localises to the secreted. It carries out the reaction Endohydrolysis of (1-&gt;4)-beta-linkages in the backbone of lambda-carrageenan, resulting in the tetrasaccharide alpha-D-Galp2,6S2-(1-&gt;3)-beta-D-Galp2S-(1-&gt;4)-alpha-D-Galp2,6S2-(1-&gt;3)-D-Galp2S.. Its function is as follows. Hydrolyzes lambda-carrageenan with inversion of anomeric configuration. Does not hydrolyze iota- and kappa-carrageenans, agarose or porphyran. The polypeptide is Lambda-carrageenase (Pseudoalteromonas carrageenovora (Alteromonas carrageenovora)).